We begin with the raw amino-acid sequence, 305 residues long: Elongation factor Ts (305 aa).

Residues 81-84 (TDFV) are involved in Mg(2+) ion dislocation from EF-Tu.

The protein belongs to the EF-Ts family.

It is found in the cytoplasm. Functionally, associates with the EF-Tu.GDP complex and induces the exchange of GDP to GTP. It remains bound to the aminoacyl-tRNA.EF-Tu.GTP complex up to the GTP hydrolysis stage on the ribosome. The sequence is that of Elongation factor Ts from Nitratiruptor sp. (strain SB155-2).